Here is a 339-residue protein sequence, read N- to C-terminus: 1-aminocyclopropane-1-carboxylate deaminase (339 aa).

Residue lysine 52 is modified to N6-(pyridoxal phosphate)lysine. Serine 79 serves as the catalytic Nucleophile.

Belongs to the ACC deaminase/D-cysteine desulfhydrase family. Homotrimer. Pyridoxal 5'-phosphate serves as cofactor.

The catalysed reaction is 1-aminocyclopropane-1-carboxylate + H2O = 2-oxobutanoate + NH4(+). Catalyzes a cyclopropane ring-opening reaction, the irreversible conversion of 1-aminocyclopropane-1-carboxylate (ACC) to ammonia and alpha-ketobutyrate. Allows growth on ACC as a nitrogen source. This chain is 1-aminocyclopropane-1-carboxylate deaminase, found in Bradyrhizobium sp. (strain BTAi1 / ATCC BAA-1182).